A 327-amino-acid chain; its full sequence is uncharacterized protein (327 aa).

A disordered region spans residues 129–306 (TPLQNQEATT…DNKKTVTTSS (178 aa)). Polar residues predominate over residues 130–144 (PLQNQEATTSPTIES). Composition is skewed to basic and acidic residues over residues 184–196 (KSVENKKGSDRNV) and 233–276 (TKDE…EKIV).

This is an uncharacterized protein from Caenorhabditis elegans.